The primary structure comprises 275 residues: Formamidopyrimidine-DNA glycosylase (275 aa).

P2 functions as the Schiff-base intermediate with DNA in the catalytic mechanism. Catalysis depends on E3, which acts as the Proton donor. Residue K59 is the Proton donor; for beta-elimination activity of the active site. DNA is bound by residues H93, R112, and R153. An FPG-type zinc finger spans residues 238–272 (NVYDRVGKPCPRCQTAIERIVVAQRSTFFCPLCQV). The Proton donor; for delta-elimination activity role is filled by R262.

The protein belongs to the FPG family. Monomer. Zn(2+) is required as a cofactor.

It carries out the reaction Hydrolysis of DNA containing ring-opened 7-methylguanine residues, releasing 2,6-diamino-4-hydroxy-5-(N-methyl)formamidopyrimidine.. The enzyme catalyses 2'-deoxyribonucleotide-(2'-deoxyribose 5'-phosphate)-2'-deoxyribonucleotide-DNA = a 3'-end 2'-deoxyribonucleotide-(2,3-dehydro-2,3-deoxyribose 5'-phosphate)-DNA + a 5'-end 5'-phospho-2'-deoxyribonucleoside-DNA + H(+). In terms of biological role, involved in base excision repair of DNA damaged by oxidation or by mutagenic agents. Acts as a DNA glycosylase that recognizes and removes damaged bases. Has a preference for oxidized purines, such as 7,8-dihydro-8-oxoguanine (8-oxoG). Has AP (apurinic/apyrimidinic) lyase activity and introduces nicks in the DNA strand. Cleaves the DNA backbone by beta-delta elimination to generate a single-strand break at the site of the removed base with both 3'- and 5'-phosphates. This Chloroflexus aggregans (strain MD-66 / DSM 9485) protein is Formamidopyrimidine-DNA glycosylase.